A 487-amino-acid chain; its full sequence is Protein nucleotidyltransferase YdiU (487 aa).

ATP contacts are provided by glycine 90, glycine 92, arginine 93, lysine 113, aspartate 125, glycine 126, arginine 176, and arginine 183. Residue aspartate 252 is the Proton acceptor of the active site. Residues asparagine 253 and aspartate 262 each coordinate Mg(2+). Residue aspartate 262 coordinates ATP.

Belongs to the SELO family. Mg(2+) is required as a cofactor. It depends on Mn(2+) as a cofactor.

It catalyses the reaction L-seryl-[protein] + ATP = 3-O-(5'-adenylyl)-L-seryl-[protein] + diphosphate. The catalysed reaction is L-threonyl-[protein] + ATP = 3-O-(5'-adenylyl)-L-threonyl-[protein] + diphosphate. The enzyme catalyses L-tyrosyl-[protein] + ATP = O-(5'-adenylyl)-L-tyrosyl-[protein] + diphosphate. It carries out the reaction L-histidyl-[protein] + UTP = N(tele)-(5'-uridylyl)-L-histidyl-[protein] + diphosphate. It catalyses the reaction L-seryl-[protein] + UTP = O-(5'-uridylyl)-L-seryl-[protein] + diphosphate. The catalysed reaction is L-tyrosyl-[protein] + UTP = O-(5'-uridylyl)-L-tyrosyl-[protein] + diphosphate. Its function is as follows. Nucleotidyltransferase involved in the post-translational modification of proteins. It can catalyze the addition of adenosine monophosphate (AMP) or uridine monophosphate (UMP) to a protein, resulting in modifications known as AMPylation and UMPylation. The chain is Protein nucleotidyltransferase YdiU from Pseudomonas syringae pv. tomato (strain ATCC BAA-871 / DC3000).